We begin with the raw amino-acid sequence, 291 residues long: Gamma-soluble NSF attachment protein (291 aa).

Belongs to the SNAP family.

It is found in the membrane. In terms of biological role, required for vesicular transport between the endoplasmic reticulum and the Golgi apparatus. Binds to SNARE complex and then recruits NSF to disassemble it. This is Gamma-soluble NSF attachment protein (GSNAP) from Arabidopsis thaliana (Mouse-ear cress).